Consider the following 1045-residue polypeptide: Endoglucanase B (1045 aa).

Positions 1–33 (MLRQVPRTLVAGGSALAVAVGVLVAPLATGAAA) are cleaved as a signal peptide. Residues 34-492 (APTYNYAEAL…LASFPTPEQP (459 aa)) form a catalytic region. Residue aspartate 91 is the Nucleophile of the active site. Catalysis depends on residues histidine 410, aspartate 449, and glutamate 458. Residues 493 to 642 (DGDQLFVEAM…STLVWGKEPT (150 aa)) form the CBM3 domain. Linker ('hinge') (Pro-Thr box) stretches follow at residues 644–650 (TTTDTTP), 734–748 (AAVTFTTDTTGETEP), 831–846 (APVTFTTAAPPVDTVA), and 931–944 (SPVTFTTLPVTSTP). Fibronectin type-III domains follow at residues 653-743 (TPGT…TDTT), 751-840 (TPGT…TAAP), and 849-940 (VPGT…TLPV). Positions 939–1045 (PVTSTPSCTV…SFTVNGEVCG (107 aa)) constitute a CBM2 domain. A disulfide bridge connects residues cysteine 946 and cysteine 1044.

The protein belongs to the glycosyl hydrolase 9 (cellulase E) family.

It carries out the reaction Endohydrolysis of (1-&gt;4)-beta-D-glucosidic linkages in cellulose, lichenin and cereal beta-D-glucans.. Its function is as follows. The biological conversion of cellulose to glucose generally requires three types of hydrolytic enzymes: (1) Endoglucanases which cut internal beta-1,4-glucosidic bonds; (2) Exocellobiohydrolases that cut the disaccharide cellobiose from the non-reducing end of the cellulose polymer chain; (3) Beta-1,4-glucosidases which hydrolyze the cellobiose and other short cello-oligosaccharides to glucose. In Cellulomonas fimi, this protein is Endoglucanase B (cenB).